A 247-amino-acid chain; its full sequence is Chaperone protein NfaE (247 aa).

The first 29 residues, 1-29, serve as a signal peptide directing secretion; sequence MKMRAVAVFTGMLTGVLSVTGLLSAGAYA. The interval 106–125 is disordered; it reads GQQSSRRRSVSTGGEFPSDR.

It belongs to the periplasmic pilus chaperone family.

Its subcellular location is the periplasm. Functionally, involved in the biogenesis of the NFA-I adhesin. This Escherichia coli protein is Chaperone protein NfaE (nfaE).